Consider the following 293-residue polypeptide: Bifunctional protein FolD (293 aa).

NADP(+) contacts are provided by residues 166–168 (GAS) and Ile-232.

It belongs to the tetrahydrofolate dehydrogenase/cyclohydrolase family. As to quaternary structure, homodimer.

The enzyme catalyses (6R)-5,10-methylene-5,6,7,8-tetrahydrofolate + NADP(+) = (6R)-5,10-methenyltetrahydrofolate + NADPH. The catalysed reaction is (6R)-5,10-methenyltetrahydrofolate + H2O = (6R)-10-formyltetrahydrofolate + H(+). It participates in one-carbon metabolism; tetrahydrofolate interconversion. Its function is as follows. Catalyzes the oxidation of 5,10-methylenetetrahydrofolate to 5,10-methenyltetrahydrofolate and then the hydrolysis of 5,10-methenyltetrahydrofolate to 10-formyltetrahydrofolate. This Yersinia enterocolitica serotype O:8 / biotype 1B (strain NCTC 13174 / 8081) protein is Bifunctional protein FolD.